A 308-amino-acid polypeptide reads, in one-letter code: Pantothenate kinase (308 aa).

90–97 lines the ATP pocket; sequence GSVAVGKS.

This sequence belongs to the prokaryotic pantothenate kinase family.

Its subcellular location is the cytoplasm. The catalysed reaction is (R)-pantothenate + ATP = (R)-4'-phosphopantothenate + ADP + H(+). Its pathway is cofactor biosynthesis; coenzyme A biosynthesis; CoA from (R)-pantothenate: step 1/5. This chain is Pantothenate kinase, found in Sorangium cellulosum (strain So ce56) (Polyangium cellulosum (strain So ce56)).